We begin with the raw amino-acid sequence, 1345 residues long: Aldehyde oxidase 2 (1345 aa).

Residues 9–96 enclose the 2Fe-2S ferredoxin-type domain; the sequence is DDLEFFVNGR…GAAVTTVEGV (88 aa). [2Fe-2S] cluster-binding residues include C48, C53, C56, and C78. Position 117 (Q117) interacts with Mo-molybdopterin. [2Fe-2S] cluster contacts are provided by C118, C121, C153, and C155. Position 155 (C155) interacts with Mo-molybdopterin. In terms of domain architecture, FAD-binding PCMH-type spans 238–423; the sequence is FYGERITWIA…GSVYIPHSQK (186 aa). FAD is bound by residues 266–273, A347, S356, H360, D369, and L413; that span reads LISGNTAL. Mo-molybdopterin contacts are provided by residues 812–813, 1094–1097, Q1209, and L1274; these read GF and ASVG. E1276 (proton acceptor; for azaheterocycle hydroxylase activity) is an active-site residue.

This sequence belongs to the xanthine dehydrogenase family. As to quaternary structure, homodimer. [2Fe-2S] cluster is required as a cofactor. Requires FAD as cofactor. It depends on Mo-molybdopterin as a cofactor. In terms of tissue distribution, expressed in olfactory mucosa epithelium (at protein level). Detected in skin.

Its subcellular location is the cytoplasm. The catalysed reaction is an aldehyde + O2 + H2O = a carboxylate + H2O2 + H(+). Its function is as follows. Oxidase with broad substrate specificity, oxidizing aromatic azaheterocycles, such as phthalazine, as well as aldehydes, such as benzaldehyde and retinal. Cannot use hypoxanthine as substrate. This is Aldehyde oxidase 2 (Aox2) from Mus musculus (Mouse).